We begin with the raw amino-acid sequence, 255 residues long: Probable membrane transporter protein HI_0198 (255 aa).

Helical transmembrane passes span 7–27, 28–48, 76–96, 99–119, 132–152, 153–173, 191–211, and 235–255; these read LLAI…IAGG, GGLI…MALG, IWFI…LIQS, VAIF…YFLF, LSYL…DGFF, GPGT…FNLP, FALF…MMAG, and VVIM…WFHF.

It belongs to the 4-toluene sulfonate uptake permease (TSUP) (TC 2.A.102) family.

The protein resides in the cell membrane. The polypeptide is Probable membrane transporter protein HI_0198 (Haemophilus influenzae (strain ATCC 51907 / DSM 11121 / KW20 / Rd)).